The following is a 950-amino-acid chain: MEKSLKKKIIVRGAKEHNLKNVDVDIPKDGLVVISGKSGSGKSSLAFDTIFAEGQRRYMESVSAYARQFLGVMKKPNVDYIDGLSPSIAIEQRTISNNPRSTVGTITEIYDYYRLIFAKIGKAYCPNDGRLIEEQSLDKIVNTILSYSEGSKVILFAPIVRGSKGSHKKVLEKILNQGFNRVRINSEDYLIEDALNLNLHKNKKHTIEIIVDRIKLGNNVRVRLAESIETSLAVSNGYLRVEIDNDLEKIDKLFTEHNSCPLCGFSLPLIEPRLFSFNSPFGACSECSGLGVTLEFDFESICPDTSLSFNDDAFLTFKTSSSWSVAIFKGLAKHYNFDLNTPIKDIPDKVLKQILYGSNEKIDFIYQSKEMEAKELDGGFHYSKTFEGLLPLLKRRYLATESESTKIFYENLMSKKICNSCKGKRLSVGALTVKINGKDIQDLTNLSVFDSYVFFENLQLDMVDEKISKEILKEIKSRLKFLIDVGLSYLYLNRISGSLSGGEAQRIRLATQIGSALSGVIYVLDEPSIGLHQRDNEKLISTLVNLKNLGNTVIVVEHDEQTLRTADYIIDMGPGAGILGGEIVAKGALIDILNSKNSLTGQYLSGKFKIDVPSSRRKADKGEILLLGSNKNNLKNIDLSIPLGVFTVITGVSGSGKSTLLNEVLYPALDSRLKLNEKYCDGFKDIVGYEKIDKIIQINQKPIGRTSRSNPATYVGFFTEIRELFAKLPDAKSRGFKAGRFSFNVKGGRCEKCQGDGYLNIQMHFLPDVFVPCDLCKGKKFNEETLEVRYKGKNIHDVLEMSVFEASKFFENVPKISHYLKFLIEVGLEYIKLGQSATTLSGGEAQRIKLAFELSKKSTGKTFYIIDEPTTGLHFDDIKKLLEVLQRLVSNGNTVVLIEHNLDVIKQADYIIDLGPDGGLAGGNIVVSGIPEEVAKCENSYTGMFLKNLL.

36–43 is an ATP binding site; the sequence is GKSGSGKS. The C4-type zinc-finger motif lies at 260 to 287; that stretch reads CPLCGFSLPLIEPRLFSFNSPFGACSEC. ABC transporter domains lie at 317–599 and 619–947; these read FKTS…KNSL and ADKG…MFLK. An ATP-binding site is contributed by 651–658; that stretch reads GVSGSGKS. The segment at 750 to 776 adopts a C4-type zinc-finger fold; the sequence is CEKCQGDGYLNIQMHFLPDVFVPCDLC.

The protein belongs to the ABC transporter superfamily. UvrA family. In terms of assembly, forms a heterotetramer with UvrB during the search for lesions.

It is found in the cytoplasm. In terms of biological role, the UvrABC repair system catalyzes the recognition and processing of DNA lesions. UvrA is an ATPase and a DNA-binding protein. A damage recognition complex composed of 2 UvrA and 2 UvrB subunits scans DNA for abnormalities. When the presence of a lesion has been verified by UvrB, the UvrA molecules dissociate. This is UvrABC system protein A from Borreliella burgdorferi (strain ATCC 35210 / DSM 4680 / CIP 102532 / B31) (Borrelia burgdorferi).